The primary structure comprises 568 residues: Sulfite reductase [NADPH] hemoprotein beta-component (568 aa).

[4Fe-4S] cluster contacts are provided by Cys426, Cys432, Cys471, and Cys475. Residue Cys475 coordinates siroheme.

This sequence belongs to the nitrite and sulfite reductase 4Fe-4S domain family. Alpha(8)-beta(8). The alpha component is a flavoprotein, the beta component is a hemoprotein. Siroheme serves as cofactor. It depends on [4Fe-4S] cluster as a cofactor.

The catalysed reaction is hydrogen sulfide + 3 NADP(+) + 3 H2O = sulfite + 3 NADPH + 4 H(+). Its pathway is sulfur metabolism; hydrogen sulfide biosynthesis; hydrogen sulfide from sulfite (NADPH route): step 1/1. Functionally, component of the sulfite reductase complex that catalyzes the 6-electron reduction of sulfite to sulfide. This is one of several activities required for the biosynthesis of L-cysteine from sulfate. This chain is Sulfite reductase [NADPH] hemoprotein beta-component, found in Xylella fastidiosa (strain M12).